We begin with the raw amino-acid sequence, 412 residues long: Imidazolonepropionase (412 aa).

Positions 76 and 78 each coordinate Fe(3+). The Zn(2+) site is built by H76 and H78. 4-imidazolone-5-propanoate is bound by residues R85, Y148, and H181. An N-formimidoyl-L-glutamate-binding site is contributed by Y148. H242 is a Fe(3+) binding site. H242 contacts Zn(2+). E245 is a 4-imidazolone-5-propanoate binding site. A Fe(3+)-binding site is contributed by D317. Position 317 (D317) interacts with Zn(2+). 2 residues coordinate N-formimidoyl-L-glutamate: N319 and G321. S322 lines the 4-imidazolone-5-propanoate pocket.

This sequence belongs to the metallo-dependent hydrolases superfamily. HutI family. Requires Zn(2+) as cofactor. It depends on Fe(3+) as a cofactor.

It is found in the cytoplasm. It catalyses the reaction 4-imidazolone-5-propanoate + H2O = N-formimidoyl-L-glutamate. Its pathway is amino-acid degradation; L-histidine degradation into L-glutamate; N-formimidoyl-L-glutamate from L-histidine: step 3/3. Functionally, catalyzes the hydrolytic cleavage of the carbon-nitrogen bond in imidazolone-5-propanoate to yield N-formimidoyl-L-glutamate. It is the third step in the universal histidine degradation pathway. This Staphylococcus aureus (strain Mu50 / ATCC 700699) protein is Imidazolonepropionase.